The primary structure comprises 409 residues: MTTREKLEAARRAAPVVAELSTESKNALLLALARTIDERTEEILAANRADLEASGLDGSLRDRLLLTPERIATMAEGLREVAALADPVGETLAEWERPNGLRIRKVRVPLGVVAIIYEARPNVTIDVIGLALKSGNAVVLRGGKEAVRSNECLVKIAGATPGMPDGAIQLLDASNRESVQQLMKARGLVDVIVPRGGAGLIQFVVENSTVPVIETGAGNCHIFVDESANLDMADRIVINAKTQRPSVCNAAEKLLVHRAIAKEYVPRIVKLLLDHGVEVRGDAETLALAQGMQVAEATSADWDEEYLRLCMAVKVVADVDEAIAHINQHSTKHSESIITANDAHARRFLRAADSAAVYWNASTRFTDGAEFGFGAEMGISTQKLHCRGPFALAELTSSKYEVIGSGQVR.

Belongs to the gamma-glutamyl phosphate reductase family.

Its subcellular location is the cytoplasm. It carries out the reaction L-glutamate 5-semialdehyde + phosphate + NADP(+) = L-glutamyl 5-phosphate + NADPH + H(+). It functions in the pathway amino-acid biosynthesis; L-proline biosynthesis; L-glutamate 5-semialdehyde from L-glutamate: step 2/2. Catalyzes the NADPH-dependent reduction of L-glutamate 5-phosphate into L-glutamate 5-semialdehyde and phosphate. The product spontaneously undergoes cyclization to form 1-pyrroline-5-carboxylate. The protein is Gamma-glutamyl phosphate reductase of Koribacter versatilis (strain Ellin345).